The primary structure comprises 132 residues: UPF0292 protein PH1700 (132 aa).

In terms of domain architecture, Toprim spans 20-100; sequence EGAIIVEGAR…KVDTETRREL (81 aa). Residues E26, D69, and D71 each coordinate Mg(2+).

Belongs to the UPF0292 family. The cofactor is Mg(2+).

The sequence is that of UPF0292 protein PH1700 from Pyrococcus horikoshii (strain ATCC 700860 / DSM 12428 / JCM 9974 / NBRC 100139 / OT-3).